Consider the following 302-residue polypeptide: Decaprenyl-phosphate phosphoribosyltransferase (302 aa).

Lys28 contributes to the 5-phospho-alpha-D-ribose 1-diphosphate binding site. The next 2 helical transmembrane spans lie at 30–50 and 55–75; these read VLVLAAPLAALGGGVRYDYVE and VSMAFVVFSLAASAVYLVNDV. Position 70 (Tyr70) interacts with 5-phospho-alpha-D-ribose 1-diphosphate. Residues Asn73 and Asp77 each contribute to the Mg(2+) site. Lys87 contributes to the 5-phospho-alpha-D-ribose 1-diphosphate binding site. Helical transmembrane passes span 100–120 and 122–142; these read WLAYTVAVVLGVTSLAGAWML and PNLALVMVVYLAMQLAYCFGL. 5-phospho-alpha-D-ribose 1-diphosphate-binding residues include Lys143 and Arg160. 2 helical membrane passes run 146 to 166 and 170 to 190; these read AVVEICVVSSAYLIRAIAGGV and IPLSKWFLLIMAFGSLFMVAG. Residue Lys191 coordinates trans,octa-cis-decaprenyl phosphate. The next 3 membrane-spanning stretches (helical) occupy residues 218–238, 244–264, and 282–302; these read LRFVWTLSATAVVLCYGLWAF, SGSWFAVSMIPFTIAILRYAV, and RVLQLLALAWIATVGAAVAFG.

Belongs to the UbiA prenyltransferase family. DPPR synthase subfamily. As to quaternary structure, homotrimer. Requires Mg(2+) as cofactor.

It localises to the cell inner membrane. The enzyme catalyses trans,octa-cis-decaprenyl phosphate + 5-phospho-alpha-D-ribose 1-diphosphate + H(+) = trans,octa-cis-decaprenylphospho-beta-D-ribofuranose 5-phosphate + diphosphate. Its pathway is cell wall biogenesis; cell wall polysaccharide biosynthesis. Functionally, involved in the biosynthesis of decaprenylphosphoryl arabinose (DPA) a precursor for arabinan synthesis in mycobacterial cell wall biosynthesis. Catalyzes the transfer of a 5-phosphoribosyl residue from phosphoribose diphosphate (PRPP) to decaprenyl phosphate (DP) to form decaprenylphosphoryl-5-phosphoribose (DPPR). The sequence is that of Decaprenyl-phosphate phosphoribosyltransferase from Mycobacterium tuberculosis (strain CDC 1551 / Oshkosh).